Reading from the N-terminus, the 193-residue chain is dCTP deaminase (193 aa).

Residues 110–115 (RSSLAR), Asp128, 136–138 (VLE), Tyr171, Lys178, and Gln182 each bind dCTP. The active-site Proton donor/acceptor is Glu138.

Belongs to the dCTP deaminase family. In terms of assembly, homotrimer.

The enzyme catalyses dCTP + H2O + H(+) = dUTP + NH4(+). It participates in pyrimidine metabolism; dUMP biosynthesis; dUMP from dCTP (dUTP route): step 1/2. Its function is as follows. Catalyzes the deamination of dCTP to dUTP. This Aeromonas salmonicida (strain A449) protein is dCTP deaminase.